A 239-amino-acid polypeptide reads, in one-letter code: Protein GrpE (239 aa).

2 disordered regions span residues 1–54 (MIEN…ELKN) and 208–239 (SMGP…SEDV). The span at 19-42 (QDNALENVSSAQELTTENNELSSQ) shows a compositional bias: polar residues. Over residues 43–53 (KTEEINTEELK) the composition is skewed to basic and acidic residues. A compositionally biased stretch (acidic residues) spans 228–239 (DIDSEENTSEDV).

This sequence belongs to the GrpE family. Homodimer.

The protein resides in the cytoplasm. Participates actively in the response to hyperosmotic and heat shock by preventing the aggregation of stress-denatured proteins, in association with DnaK and GrpE. It is the nucleotide exchange factor for DnaK and may function as a thermosensor. Unfolded proteins bind initially to DnaJ; upon interaction with the DnaJ-bound protein, DnaK hydrolyzes its bound ATP, resulting in the formation of a stable complex. GrpE releases ADP from DnaK; ATP binding to DnaK triggers the release of the substrate protein, thus completing the reaction cycle. Several rounds of ATP-dependent interactions between DnaJ, DnaK and GrpE are required for fully efficient folding. The sequence is that of Protein GrpE from Prochlorococcus marinus (strain AS9601).